Here is a 417-residue protein sequence, read N- to C-terminus: Tyrosine--tRNA ligase (417 aa).

Tyr-40 lines the L-tyrosine pocket. The short motif at 45 to 54 (ATAASLHVGH) is the 'HIGH' region element. The L-tyrosine site is built by Tyr-177 and Gln-181. The short motif at 237 to 241 (KMGKS) is the 'KMSKS' region element. ATP is bound at residue Lys-240. Residues 351-414 (ISVVQLITRS…AGRKRHALIK (64 aa)) enclose the S4 RNA-binding domain.

Belongs to the class-I aminoacyl-tRNA synthetase family. TyrS type 1 subfamily. In terms of assembly, homodimer.

The protein resides in the cytoplasm. It catalyses the reaction tRNA(Tyr) + L-tyrosine + ATP = L-tyrosyl-tRNA(Tyr) + AMP + diphosphate + H(+). Its function is as follows. Catalyzes the attachment of tyrosine to tRNA(Tyr) in a two-step reaction: tyrosine is first activated by ATP to form Tyr-AMP and then transferred to the acceptor end of tRNA(Tyr). This chain is Tyrosine--tRNA ligase, found in Dinoroseobacter shibae (strain DSM 16493 / NCIMB 14021 / DFL 12).